We begin with the raw amino-acid sequence, 635 residues long: MIAITLPDGSRREFPGPVTVAEVAQSIGAGLAKAALAGRIDGQLVDTSFRIEQNVDLAIVTDKDTDGLDVIRHSTAHLLAYAVKELYPEAQVTIGPVIENGFYYDFAYKRPFTPEDLVAIEKRMAELAKKDEKVTREVWSRDDAVKLFEGMGEKYKAEIIASIPEDQEIGLYREGNFVDLCRGPHVPSTGKLKVFKLMKVAGAYWRGDSNNEMLQRIYGTAWAKKEDQEAYLHMLEEAEKRDHRKLGKLLDLFHLQEEAPGMVFWHPKGWQIWQAVEQYMRGRLAGAGYSEVRTPQVMDRGLWERSGHWENYKENMFVTESEKREYAIKPMNCPGHVQIFNHGLRSYRDLPLRLAEFGACHRNEPSGALHGLMRVRGFVQDDAHIFCTEGQIMAEAKDFNDLAFSIYEDFGFENVAVKLALRPDKRAGTDEIWDHAEEGLRTALRACGVEWEELPGEGAFYGPKVEYHIKDAIGRSWQCGTLQLDLVLPERLGAEYVAEDNSRKRPVMLHRAILGSFERFLGILLENHAGALPLWLAPEQVVIMSIADAHAEYAESVAQSLQKQGFRASADLRNEKITYKIREHSLQKVPYLVVVGDKERDGNQVAVRARGNVDLGSMPVSTFVERLQNDFANKS.

Positions 1–61 constitute a TGS domain; it reads MIAITLPDGS…EQNVDLAIVT (61 aa). The interval 242–533 is catalytic; it reads DHRKLGKLLD…LLENHAGALP (292 aa). Zn(2+) contacts are provided by Cys-333, His-384, and His-510.

The protein belongs to the class-II aminoacyl-tRNA synthetase family. Homodimer. The cofactor is Zn(2+).

It is found in the cytoplasm. It catalyses the reaction tRNA(Thr) + L-threonine + ATP = L-threonyl-tRNA(Thr) + AMP + diphosphate + H(+). In terms of biological role, catalyzes the attachment of threonine to tRNA(Thr) in a two-step reaction: L-threonine is first activated by ATP to form Thr-AMP and then transferred to the acceptor end of tRNA(Thr). Also edits incorrectly charged L-seryl-tRNA(Thr). This chain is Threonine--tRNA ligase, found in Ralstonia nicotianae (strain ATCC BAA-1114 / GMI1000) (Ralstonia solanacearum).